The chain runs to 658 residues: MKLYCLSGHPTLPCNILKFKSSTIMLDCGLDMTSTLSFLPLPLVHSTRLSKLPGWVTKDGNNQFEKELKECSGRVFVDSVPEFCLPETELIDLSTVDVILISNYHCMMALPYITERTGFTGTVYATEPTVQIGRLLMEELVNFIERVPKAQSATVWKHKDVQRLLPAPLKDAVEVFTWKKCYSMQEVNAALSKIQLVGYSQKIELFGVVQVTPLSSGYALGSSNWVIQSHYEKVSYVSGSSLLTTHPQPMDQTSLKNSDVLILTGLTQIPTANPDGMVGEFCSNLAMTIRSGGNVLVPCYPSGVIYDLLECLYQYIDSAGLSNVPFYFISPVANSSLEFSQIFAEWLCHNKQNKVYLPEPPFPHAELIQSNKLKHYPNIHGDFSNDFKQPCVVFTGHPTLRFGDVVHFMELWGKSSLNTVIFTEPDFSYLDALAPYQPLAMKCVYCPIDTRLNFIQVTKLLKEVQPLHVVCPEQYTQPPATQSHRSDLMIDCQPPPMSYHRAEVLTLPFKRRYEKIEIMPELAQSLVPFEMKPGVSLATVSAVLHSKDNKHVLQPPPKPVAPPGSKKRKRPAEESPETPPFKPLLSGSIPVEQFVQTLEKNGFSDVKIEDTAKGHIVHLQEAETLIQFEEDSTHIICEHDERLRVRLRDLVLKFLQKF.

The disordered stretch occupies residues 547–586 (KDNKHVLQPPPKPVAPPGSKKRKRPAEESPETPPFKPLLS). The short motif at 566 to 570 (KKRKR) is the Nuclear localization signal element.

Belongs to the metallo-beta-lactamase superfamily. RNA-metabolizing metallo-beta-lactamase-like family. INTS9 subfamily. In terms of assembly, component of the Integrator complex, composed of core subunits INTS1, INTS2, INTS3, INTS4, INTS5, INTS6, INTS7, INTS8, INTS9/RC74, INTS10, INTS11/CPSF3L, INTS12, INTS13, INTS14 and INTS15. The core complex associates with protein phosphatase 2A subunits PPP2CA and PPP2R1A, to form the Integrator-PP2A (INTAC) complex. INTS9 is part of the RNA endonuclease subcomplex, composed of INTS4, INTS9, INTS11 and inositol hexakisphosphate (InsP6).

It is found in the nucleus. Its subcellular location is the cytoplasm. Functionally, component of the integrator complex, a multiprotein complex that terminates RNA polymerase II (Pol II) transcription in the promoter-proximal region of genes. The integrator complex provides a quality checkpoint during transcription elongation by driving premature transcription termination of transcripts that are unfavorably configured for transcriptional elongation: the complex terminates transcription by (1) catalyzing dephosphorylation of the C-terminal domain (CTD) of Pol II subunit POLR2A/RPB1 and SUPT5H/SPT5, (2) degrading the exiting nascent RNA transcript via endonuclease activity and (3) promoting the release of Pol II from bound DNA. The integrator complex is also involved in terminating the synthesis of non-coding Pol II transcripts, such as enhancer RNAs (eRNAs), small nuclear RNAs (snRNAs), telomerase RNAs and long non-coding RNAs (lncRNAs). The sequence is that of Integrator complex subunit 9 (ints9) from Xenopus laevis (African clawed frog).